Here is a 513-residue protein sequence, read N- to C-terminus: ATP synthase subunit alpha (513 aa).

Residue 169–176 (GDRQIGKT) coordinates ATP.

The protein belongs to the ATPase alpha/beta chains family. In terms of assembly, F-type ATPases have 2 components, CF(1) - the catalytic core - and CF(0) - the membrane proton channel. CF(1) has five subunits: alpha(3), beta(3), gamma(1), delta(1), epsilon(1). CF(0) has three main subunits: a(1), b(2) and c(9-12). The alpha and beta chains form an alternating ring which encloses part of the gamma chain. CF(1) is attached to CF(0) by a central stalk formed by the gamma and epsilon chains, while a peripheral stalk is formed by the delta and b chains.

It localises to the cell inner membrane. The catalysed reaction is ATP + H2O + 4 H(+)(in) = ADP + phosphate + 5 H(+)(out). Functionally, produces ATP from ADP in the presence of a proton gradient across the membrane. The alpha chain is a regulatory subunit. In Francisella tularensis subsp. novicida (strain U112), this protein is ATP synthase subunit alpha.